A 195-amino-acid polypeptide reads, in one-letter code: Granulocyte colony-stimulating factor (195 aa).

The first 21 residues, 1 to 21 (MKLMVLQLLLWHSALWTVHEA), serve as a signal peptide directing secretion. 2 disulfide bridges follow: Cys57–Cys63 and Cys85–Cys95. O-linked (GalNAc...) threonine glycosylation occurs at Thr154.

This sequence belongs to the IL-6 superfamily. In terms of assembly, monomer. In terms of processing, O-glycosylated.

It is found in the secreted. Granulocyte/macrophage colony-stimulating factors are cytokines that act in hematopoiesis by controlling the production, differentiation, and function of 2 related white cell populations of the blood, the granulocytes and the monocytes-macrophages. This CSF induces granulocytes. This Bos taurus (Bovine) protein is Granulocyte colony-stimulating factor (CSF3).